The primary structure comprises 559 residues: DNA ligase (559 aa).

An ATP-binding site is contributed by glutamate 247. Lysine 249 acts as the N6-AMP-lysine intermediate in catalysis. 6 residues coordinate ATP: arginine 254, arginine 269, glutamate 299, phenylalanine 339, arginine 414, and lysine 420.

It belongs to the ATP-dependent DNA ligase family. Monomer. It depends on Mg(2+) as a cofactor.

It catalyses the reaction ATP + (deoxyribonucleotide)n-3'-hydroxyl + 5'-phospho-(deoxyribonucleotide)m = (deoxyribonucleotide)n+m + AMP + diphosphate.. It carries out the reaction NAD(+) + (deoxyribonucleotide)n-3'-hydroxyl + 5'-phospho-(deoxyribonucleotide)m = (deoxyribonucleotide)n+m + AMP + beta-nicotinamide D-nucleotide.. Its function is as follows. DNA ligase that seals nicks in double-stranded DNA during DNA replication, DNA recombination and DNA repair. Can also use NAD, but less efficiently than ATP. This Thermococcus kodakarensis (strain ATCC BAA-918 / JCM 12380 / KOD1) (Pyrococcus kodakaraensis (strain KOD1)) protein is DNA ligase.